The sequence spans 117 residues: Large ribosomal subunit protein bL19 (117 aa).

It belongs to the bacterial ribosomal protein bL19 family.

This protein is located at the 30S-50S ribosomal subunit interface and may play a role in the structure and function of the aminoacyl-tRNA binding site. This is Large ribosomal subunit protein bL19 from Shewanella amazonensis (strain ATCC BAA-1098 / SB2B).